The sequence spans 50 residues: U-megalopygitoxin(9)-Mo13 (50 aa).

The N-terminal stretch at 1 to 23 (MKLVFLFFIVAVMVSLFVGMTEA) is a signal peptide. A disulfide bridge links cysteine 33 with cysteine 40.

Belongs to the caterpillar 9 family. Expressed by the venom apparatus.

It localises to the secreted. Functionally, probable toxin. The chain is U-megalopygitoxin(9)-Mo13 from Megalopyge opercularis (Southern flannel moth).